Consider the following 952-residue polypeptide: Probable mixed-linked glucan synthase 6 (952 aa).

A run of 2 helical transmembrane segments spans residues 102–122 (LLHP…LFVI) and 132–152 (AMWL…SWLL). Aspartate 227 is an active-site residue. Residues 278 to 308 (EEFVNDRRRVRKEYDDFKARINGLEHDIKQR) adopt a coiled-coil conformation. Residues aspartate 429 and aspartate 431 each coordinate substrate. Residue aspartate 636 is part of the active site. The next 6 membrane-spanning stretches (helical) occupy residues 718 to 738 (LFLI…HFIV), 744 to 764 (MFYV…VLEV), 782 to 802 (MTAS…KVVF), 834 to 854 (WLMI…AVAF), 865 to 885 (WLKV…LYPF), and 898 to 918 (VVVL…YINI).

The protein belongs to the glycosyltransferase 2 family. Plant cellulose synthase-like F subfamily.

It localises to the golgi apparatus membrane. Its function is as follows. May catalyze both beta-1,3 and beta-1,4 glycosidic linkage on beta-D-glucan. Essential for (1,3;1,4)-beta-D-glucans synthesis in grasses and cereals (Poaceae). The mixed-linked glucans (which are not present in walls of dicotyledons or most other monocotyledonous plants) are particularly important constituents of the walls of the starchy endosperm and aleurone cells of cereal grains such as oats, wheat, rice and barley. They can account for up to 70% by weight of the wall. The sequence is that of Probable mixed-linked glucan synthase 6 (CSLF6) from Oryza sativa subsp. japonica (Rice).